Reading from the N-terminus, the 327-residue chain is GTPase Obg (327 aa).

The 159-residue stretch at 1-159 (MQFIDQANII…WEVQLELKLL (159 aa)) folds into the Obg domain. The region spanning 160–327 (AEVGIIGLPN…SLLFEVWKRI (168 aa)) is the OBG-type G domain. Residues 166-173 (GLPNAGKS), 191-195 (FTTLI), 213-216 (DIPG), 280-283 (NKME), and 309-311 (SSS) contribute to the ATP site. Positions 173 and 193 each coordinate Mg(2+).

Belongs to the TRAFAC class OBG-HflX-like GTPase superfamily. OBG GTPase family. Monomer. The cofactor is Mg(2+).

It localises to the cytoplasm. Its function is as follows. An essential GTPase which binds GTP, GDP and possibly (p)ppGpp with moderate affinity, with high nucleotide exchange rates and a fairly low GTP hydrolysis rate. Plays a role in control of the cell cycle, stress response, ribosome biogenesis and in those bacteria that undergo differentiation, in morphogenesis control. In Prochlorococcus marinus (strain MIT 9312), this protein is GTPase Obg.